The chain runs to 394 residues: General receptor for phosphoinositides 1-associated scaffold protein (394 aa).

The interval 1 to 51 is disordered; that stretch reads MTLRRLRKLQQKEEATAAPDLAGRAPDSEAARAAPTPSGPPAAAAPPGAPG. Positions 37–49 are enriched in pro residues; the sequence is PSGPPAAAAPPGA. At threonine 76 the chain carries Phosphothreonine. A Phosphoserine modification is found at serine 93. Residues 100–189 enclose the PDZ domain; that stretch reads VLTLEKGDNQ…VLRLETLYGT (90 aa). Residues 180 to 257 form an interaction with PSCD3 region; sequence VLRLETLYGT…GAGLLPGSLP (78 aa). Tyrosine 236 is modified (phosphotyrosine). Arginine 269 is modified (omega-N-methylarginine). Positions 293-318 are disordered; it reads EPQALPPPPPPARAPGPGSAETPASV. Pro residues predominate over residues 296–306; it reads ALPPPPPPARA. Serine 386 carries the phosphoserine modification.

In terms of assembly, heteromer. Composed of TAMALIN, CYTH2 and at least one GRM1. Also interacts with CYTH3, GRM2, GRM3 and GRM5. Expressed in brain.

It is found in the cytoplasm. It localises to the perinuclear region. The protein resides in the cell membrane. The protein localises to the postsynaptic cell membrane. In terms of biological role, plays a role in intracellular trafficking and contributes to the macromolecular organization of group 1 metabotropic glutamate receptors (mGluRs) at synapses. The polypeptide is General receptor for phosphoinositides 1-associated scaffold protein (Rattus norvegicus (Rat)).